The following is a 1530-amino-acid chain: Coiled-coil domain-containing protein 141 (1530 aa).

A Spectrin repeat occupies 49 to 127; sequence NLLEIGSSQD…SMLERRRELL (79 aa). Thr-91 is modified (phosphothreonine). 3 coiled-coil regions span residues 220–251, 758–785, and 865–967; these read IDSL…VLQL, LKEK…YEEI, and AKSL…VNKK. Disordered regions lie at residues 1153 to 1240, 1259 to 1285, 1324 to 1356, and 1369 to 1403; these read SEER…PASS, LGKA…DTFT, PREV…SNVT, and SPGL…SVVS. A compositionally biased stretch (polar residues) spans 1334–1345; it reads PSSQAQEISLGT. The 89-residue stretch at 1409–1497 folds into the Ig-like domain; that stretch reads PHFSRLLSNV…GTLSSKAILH (89 aa).

Interacts with DISC1. Interacts preferentially with phosphorylated forms of myosin regulatory light chain (MRLC). Interacts (via the N-terminal region) with HDAC6; inhibits the deacetylase activity of HDAC6. Interacts with KIBRA (via the C-terminal region); retains AMPAR in the cytosol after internalization. Ubiquitinated and degradated by the CDC20-APC/C pathway. During brain development, CDC20-APC/C complex degrades CCDC141 after centrosome translocation into the dilated area. CCDC141 is restabilized in the dilation until the centrosome enters the dilation, at which point it is once again immediately destabilized by CDC20-APC/C complex. The oscillatory regulation of CCDC141 protein is needed for proper cortical migration. Post-translationally, phosphorylation at Thr-91 by PLK1 affects CCDC141 degradation.

It is found in the cytoplasm. The protein resides in the cytoskeleton. It localises to the microtubule organizing center. Its subcellular location is the centrosome. Plays a critical role in cortical radial and GnRH neurons migration during brain development. Regulates cortical radial migration by negatively controlling the activity of histone deacetylase 6 (HDAC6) and promotes centrosome maturation. CAMDI is required for dilation formation of cortical neurons during radial migration. Plays a critical role in learning and memory performance through regulation of AMPA-selective glutamate receptors (AMPARs) cell surface expression in competition with KIBRA. In Rattus norvegicus (Rat), this protein is Coiled-coil domain-containing protein 141.